Consider the following 260-residue polypeptide: Alpha-acetolactate decarboxylase (260 aa).

This sequence belongs to the alpha-acetolactate decarboxylase family.

The catalysed reaction is (2S)-2-acetolactate + H(+) = (R)-acetoin + CO2. It participates in polyol metabolism; (R,R)-butane-2,3-diol biosynthesis; (R,R)-butane-2,3-diol from pyruvate: step 2/3. In terms of biological role, converts acetolactate into acetoin, which can be excreted by the cells. This may be a mechanism for controlling the internal pH of cells in the stationary stage. This is Alpha-acetolactate decarboxylase (budA) from Klebsiella aerogenes (Enterobacter aerogenes).